The chain runs to 453 residues: Glutamyl-tRNA reductase (453 aa).

Substrate-binding positions include 52–55, Ser-105, 110–112, and Gln-116; these read TCNR and EDQ. The Nucleophile role is filled by Cys-53. Position 184–189 (184–189) interacts with NADP(+); that stretch reads GAGEMA. Residues 413–424 are compositionally biased toward low complexity; that stretch reads PGLEPEPTELPT. The interval 413–453 is disordered; sequence PGLEPEPTELPTVPDGPEGVPEELRERMSSGMLEQFSTNDD.

The protein belongs to the glutamyl-tRNA reductase family. Homodimer.

It carries out the reaction (S)-4-amino-5-oxopentanoate + tRNA(Glu) + NADP(+) = L-glutamyl-tRNA(Glu) + NADPH + H(+). It participates in porphyrin-containing compound metabolism; protoporphyrin-IX biosynthesis; 5-aminolevulinate from L-glutamyl-tRNA(Glu): step 1/2. Its function is as follows. Catalyzes the NADPH-dependent reduction of glutamyl-tRNA(Glu) to glutamate 1-semialdehyde (GSA). This is Glutamyl-tRNA reductase from Natronomonas pharaonis (strain ATCC 35678 / DSM 2160 / CIP 103997 / JCM 8858 / NBRC 14720 / NCIMB 2260 / Gabara) (Halobacterium pharaonis).